Consider the following 700-residue polypeptide: Polyribonucleotide nucleotidyltransferase (700 aa).

Residues aspartate 484 and aspartate 490 each contribute to the Mg(2+) site. The KH domain occupies 551 to 610 (PRVIRMVVDPEKIREIIGPGGKTISKIIAETGVKIDIEEDGRLYITASDLRSGERAKQMI). The 69-residue stretch at 620–688 (GEIYLGKVLR…KLGRISLSRK (69 aa)) folds into the S1 motif domain.

It belongs to the polyribonucleotide nucleotidyltransferase family. Requires Mg(2+) as cofactor.

Its subcellular location is the cytoplasm. The enzyme catalyses RNA(n+1) + phosphate = RNA(n) + a ribonucleoside 5'-diphosphate. Its function is as follows. Involved in mRNA degradation. Catalyzes the phosphorolysis of single-stranded polyribonucleotides processively in the 3'- to 5'-direction. The protein is Polyribonucleotide nucleotidyltransferase of Thermoanaerobacter sp. (strain X514).